A 333-amino-acid polypeptide reads, in one-letter code: UDP-3-O-acylglucosamine N-acyltransferase (333 aa).

The active-site Proton acceptor is histidine 225.

It belongs to the transferase hexapeptide repeat family. LpxD subfamily. Homotrimer.

It carries out the reaction a UDP-3-O-[(3R)-3-hydroxyacyl]-alpha-D-glucosamine + a (3R)-hydroxyacyl-[ACP] = a UDP-2-N,3-O-bis[(3R)-3-hydroxyacyl]-alpha-D-glucosamine + holo-[ACP] + H(+). It functions in the pathway bacterial outer membrane biogenesis; LPS lipid A biosynthesis. In terms of biological role, catalyzes the N-acylation of UDP-3-O-acylglucosamine using 3-hydroxyacyl-ACP as the acyl donor. Is involved in the biosynthesis of lipid A, a phosphorylated glycolipid that anchors the lipopolysaccharide to the outer membrane of the cell. The chain is UDP-3-O-acylglucosamine N-acyltransferase from Paracidovorax citrulli (strain AAC00-1) (Acidovorax citrulli).